We begin with the raw amino-acid sequence, 567 residues long: MLNLTLAQLNFTVGDVEGNKEKILKVIDEYSEKSHIIAFPELSLSGYPPEDLLLQPHFLKECEKAFDQIIHHTRNYDVIVAVGLPYYEFDLYNALAVIHRGEVLGIYKKHFLPNYSVFDEYRYFRKGEEPLMIEVNGHKVSFSICEDIWYPDGVERQTALSGAELIVNVNASPYHVNKYSFKESFLKSRAEDNLCFVAYVNLVGGQDELVFDGRSIVISPFGKLVARAKAFEEDILTVTLDLGEAKRKRLLDLRWREGSYGREKVNVKRSVSLPDKEFFRGRIEENPKEEEEIYAALKLSLRDYVRKNGFEKVVLGLSGGIDSSFVACLAVDALGRENVKGVYMPSQFSSKESYEDAKALAQNLGIEFHVIPIKEIYRAYFNEFEKEICEITFDVADENIQARIRANILFYFSNKFRYLVLSTSNKSETAVGYTTIYGDMAGGFAPIKDVYKTWVYKLARYRNSISPDIPERVFKKPPSAELRPNQTDQDVLPPYEILDQILMLYIEENLSPEEIIRKGLPRDAVYKTINMIRKNEYKRKQAPIGPKITSRAFGKDWRMPVTNKFFK.

Positions 2-242 (LNLTLAQLNF…EDILTVTLDL (241 aa)) constitute a CN hydrolase domain. Residue E41 is the Proton acceptor; for glutaminase activity of the active site. Residue K109 is the For glutaminase activity of the active site. Y115 lines the L-glutamine pocket. The active-site Nucleophile; for glutaminase activity is the C145. S172 and K178 together coordinate L-glutamine. The segment at 287-567 (PKEEEEIYAA…RMPVTNKFFK (281 aa)) is ligase. 316 to 323 (GLSGGIDS) is an ATP binding site. A deamido-NAD(+)-binding site is contributed by N399. T423 provides a ligand contact to ATP. The deamido-NAD(+) site is built by E428 and K538.

This sequence in the C-terminal section; belongs to the NAD synthetase family.

It catalyses the reaction deamido-NAD(+) + L-glutamine + ATP + H2O = L-glutamate + AMP + diphosphate + NAD(+) + H(+). The protein operates within cofactor biosynthesis; NAD(+) biosynthesis; NAD(+) from deamido-NAD(+) (L-Gln route): step 1/1. In terms of biological role, catalyzes the ATP-dependent amidation of deamido-NAD to form NAD. Uses L-glutamine as a nitrogen source. This chain is Glutamine-dependent NAD(+) synthetase, found in Aquifex aeolicus (strain VF5).